Reading from the N-terminus, the 403-residue chain is Blue light- and temperature-regulated antirepressor BluF (403 aa).

A BLUF domain is found at 2–93 (LTTLIYRSHI…ARRFGKAGME (92 aa)). Residues 98 to 144 (RLHERDDVLQAVFDKGTSKFQLTYDDRALQFFRTFVLATEQSTYFEI) form a joining helix region. The EAL domain occupies 155–403 (DGSDKELDSC…IPSIAWPEKK (249 aa)).

Monomer, it undergoes transient dimerization following photoexcitation or upon temperature reduction, with a relaxation time of about 2 minutes. The dimer may be the inactive state. Interacts with the N- and C-terminal domains of BluR. Can also interact with the C-terminal domain of MlrA. Requires FAD as cofactor.

In terms of biological role, binds to and releases the BluR repressor from its bound DNA target in a blue light-dependent (470 nm) fashion. A shift to low temperature also triggers a BluF-mediated relief of repression by BluR, suggesting BluF may serve as a thermometer. Blue light may act to increase the affinity of BluF for BluR, allowing it to be released from its operator. The protein has a reversible photocycle, and undergoes structural changes, probably in the EAL domain, in response to light. The polypeptide is Blue light- and temperature-regulated antirepressor BluF (Escherichia coli (strain K12)).